Here is a 486-residue protein sequence, read N- to C-terminus: Protein hold'em (486 aa).

The OB DNA-binding region spans I166–A285.

The protein belongs to the MEIOB family. Interacts with mei-9 and Ercc1.

Single-stranded DNA-binding protein required for meiosis. May be involved in the resolution of recombination intermediates into crossovers in the meiotic recombination pathway. The protein is Protein hold'em (hdm) of Drosophila melanogaster (Fruit fly).